The primary structure comprises 108 residues: UPF0145 protein Fnod_0426 (108 aa).

It belongs to the UPF0145 family.

This is UPF0145 protein Fnod_0426 from Fervidobacterium nodosum (strain ATCC 35602 / DSM 5306 / Rt17-B1).